Reading from the N-terminus, the 116-residue chain is Holo-[acyl-carrier-protein] synthase (116 aa).

Positions 8 and 59 each coordinate Mg(2+).

The protein belongs to the P-Pant transferase superfamily. AcpS family. The cofactor is Mg(2+).

It is found in the cytoplasm. The enzyme catalyses apo-[ACP] + CoA = holo-[ACP] + adenosine 3',5'-bisphosphate + H(+). Functionally, transfers the 4'-phosphopantetheine moiety from coenzyme A to a Ser of acyl-carrier-protein. The polypeptide is Holo-[acyl-carrier-protein] synthase (Staphylococcus saprophyticus subsp. saprophyticus (strain ATCC 15305 / DSM 20229 / NCIMB 8711 / NCTC 7292 / S-41)).